The primary structure comprises 216 residues: Probable transaldolase (216 aa).

Lys83 (schiff-base intermediate with substrate) is an active-site residue.

It belongs to the transaldolase family. Type 3B subfamily.

Its subcellular location is the cytoplasm. It catalyses the reaction D-sedoheptulose 7-phosphate + D-glyceraldehyde 3-phosphate = D-erythrose 4-phosphate + beta-D-fructose 6-phosphate. Its pathway is carbohydrate degradation; pentose phosphate pathway; D-glyceraldehyde 3-phosphate and beta-D-fructose 6-phosphate from D-ribose 5-phosphate and D-xylulose 5-phosphate (non-oxidative stage): step 2/3. Functionally, transaldolase is important for the balance of metabolites in the pentose-phosphate pathway. This chain is Probable transaldolase, found in Sorangium cellulosum (strain So ce56) (Polyangium cellulosum (strain So ce56)).